Consider the following 122-residue polypeptide: Large ribosomal subunit protein uL18 (122 aa).

This sequence belongs to the universal ribosomal protein uL18 family. Part of the 50S ribosomal subunit; part of the 5S rRNA/L5/L18/L25 subcomplex. Contacts the 5S and 23S rRNAs.

Its function is as follows. This is one of the proteins that bind and probably mediate the attachment of the 5S RNA into the large ribosomal subunit, where it forms part of the central protuberance. The sequence is that of Large ribosomal subunit protein uL18 from Thermosipho melanesiensis (strain DSM 12029 / CIP 104789 / BI429).